A 62-amino-acid polypeptide reads, in one-letter code: MKSTSVFILFAGIAIMACLQMTGTEAAPSASPNPTPVARADPDPEAFGPVIGLLSGILKSLL.

An N-terminal signal peptide occupies residues 1–26 (MKSTSVFILFAGIAIMACLQMTGTEA). 3 AXPX repeats span residues 26-29 (AAPS), 30-33 (ASPN), and 40-43 (ADPD). Residues 27–46 (APSASPNPTPVARADPDPEA) constitute a propeptide that is removed on maturation.

Belongs to the MCD family. In terms of tissue distribution, expressed by the venom gland.

Its subcellular location is the secreted. The protein localises to the target cell membrane. In terms of biological role, antimicrobial peptide with strong activity against the fungus B.cinerea (MIC=5 uM) and the Gram-positive bacterium S.aureus (MIC=50 uM), and no activity against C.albicans (MIC&gt;200 uM), and the Gram-negative bacterium E.coli (MIC&gt;200 uM). Shows cytolytic activity against insect cell lines. Has no hemolytic activity against human erythrocytes. In vivo, peptide injection in the vicinity of the head and thorax of lepidopteran larvae induces feeding disorder that lasts one or two days before recovering. The chain is Venom peptide 6 from Eumenes pomiformis (Potter wasp).